Here is a 103-residue protein sequence, read N- to C-terminus: UPF0091 protein PH0944 (103 aa).

The protein belongs to the UPF0091 family.

This Pyrococcus horikoshii (strain ATCC 700860 / DSM 12428 / JCM 9974 / NBRC 100139 / OT-3) protein is UPF0091 protein PH0944.